Here is a 101-residue protein sequence, read N- to C-terminus: UPF0235 protein Cpha266_2081 (101 aa).

It belongs to the UPF0235 family.

This Chlorobium phaeobacteroides (strain DSM 266 / SMG 266 / 2430) protein is UPF0235 protein Cpha266_2081.